The following is a 340-amino-acid chain: L-galactonate-5-dehydrogenase (340 aa).

7 residues coordinate Zn(2+): cysteine 40, cysteine 65, cysteine 92, cysteine 95, cysteine 98, cysteine 106, and glutamate 146.

This sequence belongs to the zinc-containing alcohol dehydrogenase family. The cofactor is Zn(2+).

It catalyses the reaction L-galactonate + NAD(+) = keto-D-tagaturonate + NADH + H(+). Its activity is regulated as follows. Inhibited by EDTA. Catalyzes the oxidation of L-galactonate to D-tagaturonate. Required for growth on L-galactonate as the sole carbon source. In vitro, can also use L-gulonate. The sequence is that of L-galactonate-5-dehydrogenase (lgoD) from Escherichia coli (strain K12).